We begin with the raw amino-acid sequence, 174 residues long: Ubiquinone biosynthesis accessory factor UbiT (174 aa).

The region spanning Leu45–Asp133 is the SCP2 domain.

The protein belongs to the UbiT family.

The protein operates within cofactor biosynthesis; ubiquinone biosynthesis. In terms of biological role, required for O(2)-independent ubiquinone (coenzyme Q) biosynthesis. Likely functions as an accessory factor. The polypeptide is Ubiquinone biosynthesis accessory factor UbiT (Escherichia coli O157:H7).